A 184-amino-acid polypeptide reads, in one-letter code: Protein GrpE (184 aa).

A compositionally biased stretch (basic and acidic residues) spans 1-17; that stretch reads MQHEDKTPEQQENKTPE. A disordered region spans residues 1 to 39; that stretch reads MQHEDKTPEQQENKTPETELQQENAPATPQEAGAAGSID. A compositionally biased stretch (polar residues) spans 18–27; the sequence is TELQQENAPA.

The protein belongs to the GrpE family. As to quaternary structure, homodimer.

The protein localises to the cytoplasm. Participates actively in the response to hyperosmotic and heat shock by preventing the aggregation of stress-denatured proteins, in association with DnaK and GrpE. It is the nucleotide exchange factor for DnaK and may function as a thermosensor. Unfolded proteins bind initially to DnaJ; upon interaction with the DnaJ-bound protein, DnaK hydrolyzes its bound ATP, resulting in the formation of a stable complex. GrpE releases ADP from DnaK; ATP binding to DnaK triggers the release of the substrate protein, thus completing the reaction cycle. Several rounds of ATP-dependent interactions between DnaJ, DnaK and GrpE are required for fully efficient folding. The chain is Protein GrpE from Methylobacillus flagellatus (strain ATCC 51484 / DSM 6875 / VKM B-1610 / KT).